Here is a 128-residue protein sequence, read N- to C-terminus: Large ribosomal subunit protein bL17 (128 aa).

Belongs to the bacterial ribosomal protein bL17 family. Part of the 50S ribosomal subunit. Contacts protein L32.

The chain is Large ribosomal subunit protein bL17 from Histophilus somni (strain 129Pt) (Haemophilus somnus).